A 122-amino-acid chain; its full sequence is Holo-[acyl-carrier-protein] synthase (122 aa).

The Mg(2+) site is built by D9 and E58.

It belongs to the P-Pant transferase superfamily. AcpS family. Mg(2+) serves as cofactor.

It localises to the cytoplasm. The catalysed reaction is apo-[ACP] + CoA = holo-[ACP] + adenosine 3',5'-bisphosphate + H(+). Its function is as follows. Transfers the 4'-phosphopantetheine moiety from coenzyme A to a Ser of acyl-carrier-protein. This is Holo-[acyl-carrier-protein] synthase from Chlamydia pneumoniae (Chlamydophila pneumoniae).